The following is a 219-amino-acid chain: Probable GTP-binding protein EngB (219 aa).

The region spanning 24–207 is the EngB-type G domain; the sequence is VQPEIAFAGR…HELIESWLRP (184 aa). GTP-binding positions include 32–39, 59–63, 81–84, 148–151, and 186–188; these read GRSNAGKS, GRTQH, DLPG, TKCD, and FSA. Positions 39 and 61 each coordinate Mg(2+).

The protein belongs to the TRAFAC class TrmE-Era-EngA-EngB-Septin-like GTPase superfamily. EngB GTPase family. The cofactor is Mg(2+).

Functionally, necessary for normal cell division and for the maintenance of normal septation. The polypeptide is Probable GTP-binding protein EngB (Burkholderia vietnamiensis (strain G4 / LMG 22486) (Burkholderia cepacia (strain R1808))).